The sequence spans 419 residues: UDP-N-acetylglucosamine 1-carboxyvinyltransferase (419 aa).

22 to 23 (KN) serves as a coordination point for phosphoenolpyruvate. Residue Arg93 coordinates UDP-N-acetyl-alpha-D-glucosamine. Catalysis depends on Cys117, which acts as the Proton donor. The residue at position 117 (Cys117) is a 2-(S-cysteinyl)pyruvic acid O-phosphothioketal. UDP-N-acetyl-alpha-D-glucosamine is bound by residues Asp306 and Ile328.

Belongs to the EPSP synthase family. MurA subfamily.

It localises to the cytoplasm. The catalysed reaction is phosphoenolpyruvate + UDP-N-acetyl-alpha-D-glucosamine = UDP-N-acetyl-3-O-(1-carboxyvinyl)-alpha-D-glucosamine + phosphate. The protein operates within cell wall biogenesis; peptidoglycan biosynthesis. Its function is as follows. Cell wall formation. Adds enolpyruvyl to UDP-N-acetylglucosamine. In Idiomarina loihiensis (strain ATCC BAA-735 / DSM 15497 / L2-TR), this protein is UDP-N-acetylglucosamine 1-carboxyvinyltransferase.